The chain runs to 150 residues: Large ribosomal subunit protein bL9 (150 aa).

Belongs to the bacterial ribosomal protein bL9 family.

Its function is as follows. Binds to the 23S rRNA. The sequence is that of Large ribosomal subunit protein bL9 from Neisseria gonorrhoeae.